A 110-amino-acid chain; its full sequence is MTGSGKTVTRVDLCEAVYKKVGLSRTESSAFVELVLKEITDCLEKGETVKLSSFGSFMVRKKGQRIGRNPKTGTEVPISPRRVMVFKPSAILKQRINGNSNGNGADTKAD.

This sequence belongs to the bacterial histone-like protein family. In terms of assembly, heterodimer of an alpha and a beta chain.

In terms of biological role, this protein is one of the two subunits of integration host factor, a specific DNA-binding protein that functions in genetic recombination as well as in transcriptional and translational control. This Nitrobacter hamburgensis (strain DSM 10229 / NCIMB 13809 / X14) protein is Integration host factor subunit alpha.